The following is an 866-amino-acid chain: MAAFPAYLALLSYLVPGALSHPEAKTLTSRASTEAYSPPYYPAPNGGWISEWASAYEKAHRVVSNMTLAEKVNLTSGTGIYMGPCAGQTGSVPRFGIPNLCLHDSPLGVRNSDHNTAFPAGITVGATFDKDLMYERGVGLGEEARGKGINVLLGPSVGPIGRKPRGGRNWEGFGADPSLQAFGGSLTIKGMQSTGAIASLKHLIGNEQEQHRMSSVITQGYSSNIDDRTLHELYLWPFAESVRAGAGSVMIAYNDVNRSACSQNSKLINGILKDELGFQGFVVTDWLAHIGGVSSALAGLDMSMPGDGAIPLLGTSYWSWELSRSVLNGSVPVERLNDMVTRIVATWYKMGQDKDYPLPNFSSNTEDETGPLYPGALFSPSGIVNQYVNVQGNHNVTARAIARDAITLLKNNENVLPLKRNDTLKIFGTDAGTNSDGINSCTDKGCNKGVLTMGWGSGTSRLPYLITPQEAIANISSNAEFHITDTFPLGVTAGPDDIAIVFINSDSGENYITVDGNPGDRTLAGLHAWHNGDNLVKAAAEKFSNVVVVVHTVGPILMEEWIDLDSVKAVLVAHLPGQEAGWSLTDILFGDYSPSGHLPYTIPHSESDYPESVGLIAQPFGQIQDDYTEGLYIDYRHFLKANITPRYPFGHGLSYTTFNFTEPNLSIIKALDTAYPAARPPKGSTPTYPTAKPDASEVAWPKNFNRIWRYLYPYLDNPEGAAANSSKTYPYPDGYTTEPKPAPRAGGAEGGNPALWDVTFSVQVKVTNTGSRDGRAVAQLYVELPSSLGLDTPSRQLRQFEKTKILAAGESEVLTLDVTRKDLSVWDVVVQDWKAPVNGEGVKIWVGESVADLRVGCVVGEGCSTL.

A signal peptide spans 1-20 (MAAFPAYLALLSYLVPGALS). Asn65, Asn73, and Asn257 each carry an N-linked (GlcNAc...) asparagine glycan. Asp285 is an active-site residue. Residues Asn328, Asn360, Asn395, Asn421, Asn474, Asn659, Asn664, and Asn724 are each glycosylated (N-linked (GlcNAc...) asparagine). The interval 725 to 748 (SSKTYPYPDGYTTEPKPAPRAGGA) is disordered.

Belongs to the glycosyl hydrolase 3 family.

Its subcellular location is the secreted. The enzyme catalyses Hydrolysis of terminal, non-reducing beta-D-glucosyl residues with release of beta-D-glucose.. It functions in the pathway glycan metabolism; cellulose degradation. Functionally, beta-glucosidases are one of a number of cellulolytic enzymes involved in the degradation of cellulosic biomass. Catalyzes the last step releasing glucose from the inhibitory cellobiose. The sequence is that of Probable beta-glucosidase F (bglF) from Aspergillus oryzae (strain ATCC 42149 / RIB 40) (Yellow koji mold).